The following is a 310-amino-acid chain: Transcription factor MYB53 (310 aa).

2 HTH myb-type domains span residues 9–61 (ETGL…TNYL) and 62–116 (RPDI…KKKL). 2 DNA-binding regions (H-T-H motif) span residues 37–61 (WSAL…TNYL) and 89–112 (WSMI…NTHL).

As to quaternary structure, interacts with FBX5. In terms of tissue distribution, highly expressed in roots and at lower levels in leaves, stems and flowers.

It is found in the nucleus. In terms of biological role, probable transcription factor. The polypeptide is Transcription factor MYB53 (Arabidopsis thaliana (Mouse-ear cress)).